Consider the following 118-residue polypeptide: MDVFLMIRRHKTTIFTDAKESSTVFELKRIVEGILKRPPEEQRLYKDDQLLDDGKTLGECGFTSQTARPQAPATVGLAFRADDTFEALRIEPFSSPPELPDVMKPQDSGGSANEQAVQ.

Residue Met1 is modified to N-acetylmethionine. One can recognise a Ubiquitin-like domain in the interval 1–79 (MDVFLMIRRH…QAPATVGLAF (79 aa)). Position 84 is a phosphothreonine (Thr84). Residues 91–118 (EPFSSPPELPDVMKPQDSGGSANEQAVQ) are disordered. 2 positions are modified to phosphoserine: Ser108 and Ser111. Residues 108-118 (SGGSANEQAVQ) show a composition bias toward polar residues.

This sequence belongs to the Elongin B family. In terms of assembly, heterotrimer of an A (ELOA, ELOA2 or ELOA3P), ELOB and ELOC subunit. The elongin BC complex interacts with EPOP; leading to recruit the elongin BC complex to Polycomb group (PcG) target genes, thereby restricting excessive activity of the PRC2/EED-EZH2 complex. Component of multiple cullin-RING E3 ubiquitin-protein ligase complexes composed of Elongin BC (ELOB and ELOC), a cullin (either CUL2 or CUL5), a catalytic subunit (either RBX1 or RNF7/RBX2), as well as a substrate adapter protein that can be either ASB2, ASB9, ASB11, KLHDC2, KLHDC3, KLHDC10, APPBP2, FEM1A, FEM1B, FEM1C, LRR1, PCMTD1, SOCS1, SOCS2, SOCS5, SPSB1, SPSB3, ELOA, VHL, WSB1 or RAB40C. As part of the Elongin BC E3 ubiquitin ligase complex; interacts with NRBP1. May also interact with DCUN1D1, DCUN1D2, DCUN1D3 and DCUN1D5. May form oligomers as a KLHDC2/KLHDC3-ELOB-ELOC complex; this interaction is autoinhibitory for the E3 ligase complex as the substrate-binding site of KLHDC2/KLHDC3 is blocked in the oligomer.

Its subcellular location is the nucleus. It participates in protein modification; protein ubiquitination. Its function is as follows. SIII, also known as elongin, is a general transcription elongation factor that increases the RNA polymerase II transcription elongation past template-encoded arresting sites. Subunit A is transcriptionally active and its transcription activity is strongly enhanced by binding to the dimeric complex of the SIII regulatory subunits B and C (elongin BC complex). In embryonic stem cells, the elongin BC complex is recruited by EPOP to Polycomb group (PcG) target genes in order generate genomic region that display both active and repressive chromatin properties, an important feature of pluripotent stem cells. In terms of biological role, core component of multiple cullin-2 and cullin-5-RING E3 ubiquitin-protein ligase complexes (ECS complexes), which mediate the ubiquitination of target proteins. By binding to BC-box motifs it seems to link target recruitment subunits, like VHL and members of the SOCS box family, to Cullin/RBX1 modules that activate E2 ubiquitination enzymes. Component the von Hippel-Lindau ubiquitination complex CBC(VHL). A number of ECS complexes (containing either KLHDC2, KLHDC3, KLHDC10, APPBP2, FEM1A, FEM1B or FEM1C as substrate-recognition component) are part of the DesCEND (destruction via C-end degrons) pathway, which recognizes a C-degron located at the extreme C terminus of target proteins, leading to their ubiquitination and degradation. The ECS(ASB9) complex mediates ubiquitination and degradation of CKB. As part of a multisubunit ubiquitin ligase complex, polyubiquitinates monoubiquitinated POLR2A. ECS(LRR1) ubiquitinates MCM7 and promotes CMG replisome disassembly by VCP and chromatin extraction during S-phase. As part of the ECS(RAB40C) complex, mediates ANKRD28 ubiquitination and degradation, thereby inhibiting protein phosphatase 6 (PP6) complex activity and focal adhesion assembly during cell migration. The protein is Elongin-B of Mus musculus (Mouse).